Here is a 249-residue protein sequence, read N- to C-terminus: 2,3-bisphosphoglycerate-dependent phosphoglycerate mutase 2 (249 aa).

Residues 8–15 (RHGESIWN), 21–22 (TG), R60, 87–90 (ERHY), K98, 114–115 (RR), and 183–184 (GN) each bind substrate. Residue H9 is the Tele-phosphohistidine intermediate of the active site. E87 acts as the Proton donor/acceptor in catalysis.

Belongs to the phosphoglycerate mutase family. BPG-dependent PGAM subfamily. In terms of assembly, homodimer.

It carries out the reaction (2R)-2-phosphoglycerate = (2R)-3-phosphoglycerate. The protein operates within carbohydrate degradation; glycolysis; pyruvate from D-glyceraldehyde 3-phosphate: step 3/5. In terms of biological role, catalyzes the interconversion of 2-phosphoglycerate and 3-phosphoglycerate. This chain is 2,3-bisphosphoglycerate-dependent phosphoglycerate mutase 2, found in Nitrosomonas europaea (strain ATCC 19718 / CIP 103999 / KCTC 2705 / NBRC 14298).